The sequence spans 334 residues: Phenylalanine--tRNA ligase alpha subunit (334 aa).

Glutamate 249 serves as a coordination point for Mg(2+).

It belongs to the class-II aminoacyl-tRNA synthetase family. Phe-tRNA synthetase alpha subunit type 1 subfamily. Tetramer of two alpha and two beta subunits. It depends on Mg(2+) as a cofactor.

It is found in the cytoplasm. It carries out the reaction tRNA(Phe) + L-phenylalanine + ATP = L-phenylalanyl-tRNA(Phe) + AMP + diphosphate + H(+). This chain is Phenylalanine--tRNA ligase alpha subunit, found in Desulfosudis oleivorans (strain DSM 6200 / JCM 39069 / Hxd3) (Desulfococcus oleovorans).